We begin with the raw amino-acid sequence, 553 residues long: CTP synthase (553 aa).

Residues 1-270 form an amidoligase domain region; that stretch reads MTKYVFVTGG…DELICEELKL (270 aa). Residue S13 coordinates CTP. S13 is a binding site for UTP. ATP contacts are provided by residues 14–19 and D71; that span reads SLGKGI. Positions 71 and 144 each coordinate Mg(2+). CTP contacts are provided by residues 151–153, 191–196, and K227; these read DIE and KTKPTQ. UTP contacts are provided by residues 191–196 and K227; that span reads KTKPTQ. Residues 295–547 enclose the Glutamine amidotransferase type-1 domain; the sequence is TIGMVGKYVE…VEAARAHHEA (253 aa). G356 contributes to the L-glutamine binding site. The active-site Nucleophile; for glutamine hydrolysis is C383. L-glutamine is bound by residues 384–387, E407, and R473; that span reads LGMQ. Catalysis depends on residues H520 and E522.

It belongs to the CTP synthase family. Homotetramer.

The catalysed reaction is UTP + L-glutamine + ATP + H2O = CTP + L-glutamate + ADP + phosphate + 2 H(+). It carries out the reaction L-glutamine + H2O = L-glutamate + NH4(+). It catalyses the reaction UTP + NH4(+) + ATP = CTP + ADP + phosphate + 2 H(+). It participates in pyrimidine metabolism; CTP biosynthesis via de novo pathway; CTP from UDP: step 2/2. With respect to regulation, allosterically activated by GTP, when glutamine is the substrate; GTP has no effect on the reaction when ammonia is the substrate. The allosteric effector GTP functions by stabilizing the protein conformation that binds the tetrahedral intermediate(s) formed during glutamine hydrolysis. Inhibited by the product CTP, via allosteric rather than competitive inhibition. Its function is as follows. Catalyzes the ATP-dependent amination of UTP to CTP with either L-glutamine or ammonia as the source of nitrogen. Regulates intracellular CTP levels through interactions with the four ribonucleotide triphosphates. The polypeptide is CTP synthase (Paraburkholderia phymatum (strain DSM 17167 / CIP 108236 / LMG 21445 / STM815) (Burkholderia phymatum)).